The chain runs to 210 residues: Large ribosomal subunit protein uL5 (210 aa).

The segment at 188–210 (AKDDPKKAKTKRGPAYYAKKKKK) is disordered. A compositionally biased stretch (basic residues) spans 195–210 (AKTKRGPAYYAKKKKK).

This sequence belongs to the universal ribosomal protein uL5 family. As to quaternary structure, part of the 50S ribosomal subunit; part of the 5S rRNA/L5/L18/L25 subcomplex. Contacts the 5S rRNA and the P site tRNA. Forms a bridge to the 30S subunit in the 70S ribosome.

This is one of the proteins that bind and probably mediate the attachment of the 5S RNA into the large ribosomal subunit, where it forms part of the central protuberance. In the 70S ribosome it contacts protein S13 of the 30S subunit (bridge B1b), connecting the 2 subunits; this bridge is implicated in subunit movement. Contacts the P site tRNA; the 5S rRNA and some of its associated proteins might help stabilize positioning of ribosome-bound tRNAs. The protein is Large ribosomal subunit protein uL5 of Cutibacterium acnes (strain DSM 16379 / KPA171202) (Propionibacterium acnes).